The following is a 410-amino-acid chain: Elongation factor Tu, apicoplast (410 aa).

A tr-type G domain is found at 10-214; sequence KQHINLGTIG…QIIDNIIIPT (205 aa). The G1 stretch occupies residues 19-26; sequence GHVDHGKT. 19–26 is a binding site for GTP; that stretch reads GHVDHGKT. Thr-26 contacts Mg(2+). Residues 60 to 64 form a G2 region; the sequence is GITIN. The G3 stretch occupies residues 81–84; that stretch reads DCPG. Residues 81-85 and 136-139 contribute to the GTP site; these read DCPGH and NKED. Residues 136-139 form a G4 region; that stretch reads NKED. The segment at 174–176 is G5; that stretch reads SAL.

Belongs to the TRAFAC class translation factor GTPase superfamily. Classic translation factor GTPase family. EF-Tu/EF-1A subfamily.

Its subcellular location is the plastid. The protein localises to the apicoplast. The catalysed reaction is GTP + H2O = GDP + phosphate + H(+). Its function is as follows. GTP hydrolase that promotes the GTP-dependent binding of aminoacyl-tRNA to the A-site of ribosomes during protein biosynthesis. The sequence is that of Elongation factor Tu, apicoplast (tufA) from Plasmodium falciparum (isolate 3D7).